We begin with the raw amino-acid sequence, 423 residues long: 58 kDa phosphoprotein (423 aa).

The segment covering 46–60 has biased composition (basic and acidic residues); the sequence is KMGYEKMKSEDSTEE. The segment at 46-82 is disordered; it reads KMGYEKMKSEDSTEEKSDEEEEDEEEEEEEEEDDDPE. Residues 61-82 are compositionally biased toward acidic residues; sequence KSDEEEEDEEEEEEEEEDDDPE. 3 TPR repeats span residues 113–146, 147–180, and 181–214; these read ICKL…GNPS, AMIY…NVDS, and ANAY…DYDE. A disordered region spans residues 260–301; sequence KKKAEKMYKENNKRENYDSDSSDSSYSEPDFSGDFPGGMPGG. Over residues 264–276 the composition is skewed to basic and acidic residues; that stretch reads EKMYKENNKRENY. Residues 292–362 are 19 X 3-4 AA approximate repeats; that stretch reads GDFPGGMPGG…GMPGMPGGMP (71 aa). One can recognise an STI1 domain in the interval 361–423; it reads MPDLNSPEMK…GGMMGEKPKP (63 aa).

It localises to the cytoplasm. Its function is as follows. May play a role in protein folding or protein-protein interactions. May act as a co-chaperone. This is 58 kDa phosphoprotein from Plasmodium berghei.